Reading from the N-terminus, the 501-residue chain is GTPase Obg (501 aa).

The Obg domain occupies 2 to 159 (NRFIDRVVLH…HDLILELKSM (158 aa)). Residues 160–341 (ADVGLVGFPS…LKYKLLEIVQ (182 aa)) enclose the OBG-type G domain. GTP is bound by residues 166-173 (GFPSAGKS), 191-195 (FTTLQ), 212-215 (DVPG), 292-295 (NKAD), and 322-324 (SAV). Positions 173 and 193 each coordinate Mg(2+). In terms of domain architecture, OCT spans 362-442 (VDHRTKGQFQ…IGGISFEWEP (81 aa)).

The protein belongs to the TRAFAC class OBG-HflX-like GTPase superfamily. OBG GTPase family. Monomer. The cofactor is Mg(2+).

The protein localises to the cytoplasm. An essential GTPase which binds GTP, GDP and possibly (p)ppGpp with moderate affinity, with high nucleotide exchange rates and a fairly low GTP hydrolysis rate. Plays a role in control of the cell cycle, stress response, ribosome biogenesis and in those bacteria that undergo differentiation, in morphogenesis control. The sequence is that of GTPase Obg from Corynebacterium glutamicum (strain R).